The following is a 90-amino-acid chain: Cell division protein CrgA (90 aa).

Residues 1-26 are disordered; the sequence is MPKAKVTKNSIAPVSSNPSANRTPVK. Polar residues predominate over residues 7–26; the sequence is TKNSIAPVSSNPSANRTPVK. 2 consecutive transmembrane segments (helical) span residues 38 to 58 and 69 to 89; these read VIMFAFMLVGLLWLVANYLVG and AWNYGIGFGLLIIGLLMTMGW.

The protein belongs to the CrgA family.

The protein resides in the cell membrane. Functionally, involved in cell division. The sequence is that of Cell division protein CrgA from Corynebacterium efficiens (strain DSM 44549 / YS-314 / AJ 12310 / JCM 11189 / NBRC 100395).